Reading from the N-terminus, the 424-residue chain is CinA-like protein (424 aa).

It belongs to the CinA family.

The chain is CinA-like protein from Prochlorococcus marinus (strain AS9601).